The primary structure comprises 271 residues: Mannosyl-3-phosphoglycerate phosphatase (271 aa).

The active-site Nucleophile is Asp13. Positions 13, 15, and 214 each coordinate Mg(2+).

It belongs to the HAD-like hydrolase superfamily. MPGP family. Mg(2+) is required as a cofactor.

It is found in the cytoplasm. The enzyme catalyses 2-O-(alpha-D-mannosyl)-3-phosphoglycerate + H2O = (2R)-2-O-(alpha-D-mannosyl)-glycerate + phosphate. The sequence is that of Mannosyl-3-phosphoglycerate phosphatase (yedP) from Shigella dysenteriae serotype 1 (strain Sd197).